The primary structure comprises 417 residues: UDP-N-acetylmuramoylalanine--D-glutamate ligase (417 aa).

104–110 (GSNGKST) provides a ligand contact to ATP.

Belongs to the MurCDEF family.

It is found in the cytoplasm. It carries out the reaction UDP-N-acetyl-alpha-D-muramoyl-L-alanine + D-glutamate + ATP = UDP-N-acetyl-alpha-D-muramoyl-L-alanyl-D-glutamate + ADP + phosphate + H(+). The protein operates within cell wall biogenesis; peptidoglycan biosynthesis. In terms of biological role, cell wall formation. Catalyzes the addition of glutamate to the nucleotide precursor UDP-N-acetylmuramoyl-L-alanine (UMA). This Francisella tularensis subsp. novicida (strain U112) protein is UDP-N-acetylmuramoylalanine--D-glutamate ligase.